A 425-amino-acid polypeptide reads, in one-letter code: Histidine--tRNA ligase (425 aa).

The protein belongs to the class-II aminoacyl-tRNA synthetase family. In terms of assembly, homodimer.

Its subcellular location is the cytoplasm. It catalyses the reaction tRNA(His) + L-histidine + ATP = L-histidyl-tRNA(His) + AMP + diphosphate + H(+). The chain is Histidine--tRNA ligase from Listeria innocua serovar 6a (strain ATCC BAA-680 / CLIP 11262).